The sequence spans 423 residues: Phospholipase A1-IIalpha (423 aa).

Residues 194–217 (SAQEQVQGELKRLLELYKDEEISI) are a coiled coil. Ser-223 (acyl-ester intermediate) is an active-site residue. Catalysis depends on charge relay system residues Ser-223, Asp-290, and His-327. A disordered region spans residues 399-423 (HDDDVDADDNDDSSTSNQLQELNTD). Residues 401–410 (DDVDADDNDD) are compositionally biased toward acidic residues. A compositionally biased stretch (polar residues) spans 411–423 (SSTSNQLQELNTD).

This sequence belongs to the AB hydrolase superfamily. Lipase family.

Its subcellular location is the cytoplasm. In terms of biological role, acylhydrolase that catalyzes the hydrolysis of phospholipids at the sn-1 position. This Arabidopsis thaliana (Mouse-ear cress) protein is Phospholipase A1-IIalpha.